A 106-amino-acid polypeptide reads, in one-letter code: L-rhamnose mutarotase (106 aa).

Substrate is bound at residue tyrosine 20. Histidine 24 acts as the Proton donor in catalysis. Residues tyrosine 43 and 78-79 contribute to the substrate site; that span reads WW.

Belongs to the rhamnose mutarotase family. As to quaternary structure, homodimer.

The protein localises to the cytoplasm. It catalyses the reaction alpha-L-rhamnose = beta-L-rhamnose. It functions in the pathway carbohydrate metabolism; L-rhamnose metabolism. Involved in the anomeric conversion of L-rhamnose. The protein is L-rhamnose mutarotase of Brucella anthropi (strain ATCC 49188 / DSM 6882 / CCUG 24695 / JCM 21032 / LMG 3331 / NBRC 15819 / NCTC 12168 / Alc 37) (Ochrobactrum anthropi).